Consider the following 563-residue polypeptide: Urocanate hydratase (563 aa).

NAD(+) is bound by residues 53 to 54 (GG), Gln-131, 177 to 179 (GMG), Glu-197, Arg-202, 243 to 244 (NA), 264 to 268 (QTSAH), 274 to 275 (YL), and Tyr-323. The active site involves Cys-411. Position 493 (Gly-493) interacts with NAD(+).

It belongs to the urocanase family. NAD(+) is required as a cofactor.

The protein resides in the cytoplasm. The catalysed reaction is 4-imidazolone-5-propanoate = trans-urocanate + H2O. It functions in the pathway amino-acid degradation; L-histidine degradation into L-glutamate; N-formimidoyl-L-glutamate from L-histidine: step 2/3. Functionally, catalyzes the conversion of urocanate to 4-imidazolone-5-propionate. In Yersinia enterocolitica serotype O:8 / biotype 1B (strain NCTC 13174 / 8081), this protein is Urocanate hydratase.